We begin with the raw amino-acid sequence, 447 residues long: Adenylosuccinate synthetase (447 aa).

GTP is bound by residues 35–41 (GDEGKGK) and 63–65 (GHT). Asp-36 (proton acceptor) is an active-site residue. The Mg(2+) site is built by Asp-36 and Gly-63. Residues 36-39 (DEGK), 61-64 (NAGH), Thr-153, Arg-167, Asn-245, Thr-260, and Arg-324 contribute to the IMP site. Residue His-64 is the Proton donor of the active site. Residue 320-326 (VTTKRKR) participates in substrate binding. GTP contacts are provided by residues Arg-326, 352-354 (KLD), and 435-437 (GVG).

The protein belongs to the adenylosuccinate synthetase family. As to quaternary structure, homodimer. Mg(2+) serves as cofactor.

Its subcellular location is the cytoplasm. The catalysed reaction is IMP + L-aspartate + GTP = N(6)-(1,2-dicarboxyethyl)-AMP + GDP + phosphate + 2 H(+). It participates in purine metabolism; AMP biosynthesis via de novo pathway; AMP from IMP: step 1/2. Functionally, plays an important role in the de novo pathway and in the salvage pathway of purine nucleotide biosynthesis. Catalyzes the first committed step in the biosynthesis of AMP from IMP. The protein is Adenylosuccinate synthetase of Drosophila erecta (Fruit fly).